The following is a 125-amino-acid chain: Small ribosomal subunit protein mS41 (125 aa).

A mitochondrion-targeting transit peptide spans 1–23 (MLFRRLFSSSVIVQAASKTSLRK).

It belongs to the mitochondrion-specific ribosomal protein mS41 family.

The protein localises to the mitochondrion. Involved in telomere length regulation. This Kluyveromyces lactis (strain ATCC 8585 / CBS 2359 / DSM 70799 / NBRC 1267 / NRRL Y-1140 / WM37) (Yeast) protein is Small ribosomal subunit protein mS41 (FYV4).